The chain runs to 87 residues: MEIENKNIKEIESIITDEIDNSNNIINNNNNGNINEHIINIQNEKKFELVELNPKFLKSPTMIVLALVLGVFSLVGLIFIIYFSIKK.

Residues Ile-63–Phe-83 traverse the membrane as a helical segment.

Its subcellular location is the membrane. This is an uncharacterized protein from Dictyostelium discoideum (Social amoeba).